A 166-amino-acid polypeptide reads, in one-letter code: Telethonin (166 aa).

Ser39 carries the phosphoserine modification. A disordered region spans residues 145-166 (VSKPGTLRRSLSRSMSQEAQRG). Residues 156-166 (SRSMSQEAQRG) show a composition bias toward polar residues.

As to quaternary structure, interacts with MYOZ1, MYOZ2 and MYOZ3. Interacts with CSRP3. Interacts directly with the N-terminal Ig-like domains of 2 titin (TTN) molecules. Interacts with ANKRD2; the interaction is direct.

Its subcellular location is the cytoplasm. It is found in the myofibril. The protein resides in the sarcomere. Muscle assembly regulating factor. Mediates the antiparallel assembly of titin (TTN) molecules at the sarcomeric Z-disk. In Bos taurus (Bovine), this protein is Telethonin (TCAP).